Reading from the N-terminus, the 256-residue chain is Leucine-rich repeat-containing protein 18 (256 aa).

LRR repeat units follow at residues 28 to 49, 51 to 72, 74 to 95, 97 to 118, 122 to 144, 145 to 167, 168 to 189, and 194 to 215; these read GRKRLDLSKMGITTFPKCILRL, EIDELDLSRNMIRKIPDSISKF, NLRWLDLHSNYIDKLPESIGQM, SLLFLNVSNNRLTTNGLPVELN, NIRTVNLGLNHLDSVPTTLGALK, ELHEVGLHDNLLTSIPAGISKLP, KLKKLNVKRNPFPKPDESDMFV, and RLENLYLVEEKDLCSSCLQKCQ.

The protein resides in the cytoplasm. Functionally, may be involved in the regulation of spermatogenesis and sperm maturation. This is Leucine-rich repeat-containing protein 18 (Lrrc18) from Rattus norvegicus (Rat).